The primary structure comprises 558 residues: Membrane protein insertase YidC (558 aa).

The next 6 membrane-spanning stretches (helical) occupy residues 5-25, 332-352, 355-375, 429-449, 474-494, and 520-540; these read IINL…WQYF, AIDF…MNFF, YVGN…LLMF, LPIL…YVTI, LFGL…WPIL, and FMPL…LIYW.

It belongs to the OXA1/ALB3/YidC family. Type 1 subfamily. Interacts with the Sec translocase complex via SecD. Specifically interacts with transmembrane segments of nascent integral membrane proteins during membrane integration.

The protein localises to the cell inner membrane. Required for the insertion and/or proper folding and/or complex formation of integral membrane proteins into the membrane. Involved in integration of membrane proteins that insert both dependently and independently of the Sec translocase complex, as well as at least some lipoproteins. Aids folding of multispanning membrane proteins. The sequence is that of Membrane protein insertase YidC from Rickettsia typhi (strain ATCC VR-144 / Wilmington).